Here is a 115-residue protein sequence, read N- to C-terminus: NAD(P)H-quinone oxidoreductase subunit M (115 aa).

It belongs to the complex I NdhM subunit family. As to quaternary structure, NDH-1 can be composed of about 15 different subunits; different subcomplexes with different compositions have been identified which probably have different functions.

The protein localises to the cellular thylakoid membrane. It catalyses the reaction a plastoquinone + NADH + (n+1) H(+)(in) = a plastoquinol + NAD(+) + n H(+)(out). The catalysed reaction is a plastoquinone + NADPH + (n+1) H(+)(in) = a plastoquinol + NADP(+) + n H(+)(out). NDH-1 shuttles electrons from an unknown electron donor, via FMN and iron-sulfur (Fe-S) centers, to quinones in the respiratory and/or the photosynthetic chain. The immediate electron acceptor for the enzyme in this species is believed to be plastoquinone. Couples the redox reaction to proton translocation, and thus conserves the redox energy in a proton gradient. Cyanobacterial NDH-1 also plays a role in inorganic carbon-concentration. This Synechococcus sp. (strain CC9902) protein is NAD(P)H-quinone oxidoreductase subunit M.